The sequence spans 221 residues: MKAAIYHAFSHKEAKDHDVQELGSQRAEAFVRAFLKQSIPHMSQEDCESHLQRKAVILEYFTRLKPRPRPKKKSKGLSAKQRRDMRLFDIKPEQQRYSLFLPLHELWKQYIRDLCNGLKPDTQPQMIQAKLLKADLHGAIISVTKSKCPSYVGVTGILLQETKHVFKIITREDHLKVIPKLNCVFTIEIDDFISYIYGSKFQLRASERSAKKFKAKGSIDL.

The residue at position 10 (Ser-10) is a Phosphoserine.

It belongs to the eukaryotic/archaeal RNase P protein component 1 family. As to quaternary structure, component of nuclear RNase P and RNase MRP ribonucleoproteins. RNase P consists of a catalytic RNA moiety and 10 different protein chains; POP1, POP4, POP5, POP7, RPP14, RPP21, RPP25, RPP30, RPP38 and RPP40. Within the RNase P complex, POP1, POP7 and RPP25 form the 'finger' subcomplex, POP5, RPP14, RPP40 and homodimeric RPP30 form the 'palm' subcomplex, and RPP21, POP4 and RPP38 form the 'wrist' subcomplex. All subunits of the RNase P complex interact with the catalytic RNA. Several subunits of RNase P are also part of the RNase MRP complex. RNase MRP consists of a catalytic RNA moiety and about 8 protein subunits; POP1, POP7, RPP25, RPP30, RPP38, RPP40 and possibly also POP4 and POP5.

It localises to the nucleus. Its subcellular location is the nucleolus. Its function is as follows. Component of ribonuclease P, a ribonucleoprotein complex that generates mature tRNA molecules by cleaving their 5'-ends. The sequence is that of Ribonuclease P protein subunit p29 (Pop4) from Mus musculus (Mouse).